The chain runs to 497 residues: ADP-dependent glucokinase (497 aa).

An N-terminal signal peptide occupies residues methionine 1–leucine 22. The region spanning serine 52–tyrosine 497 is the ADPK domain. 3 residues coordinate Mg(2+): glutamate 297, glutamate 328, and aspartate 481. The active-site Proton acceptor is aspartate 481.

The protein belongs to the ADP-dependent glucokinase family. As to quaternary structure, monomer. Requires Mg(2+) as cofactor.

Its subcellular location is the secreted. It catalyses the reaction D-glucose + ADP = D-glucose 6-phosphate + AMP + H(+). It participates in carbohydrate degradation; glycolysis. In terms of biological role, catalyzes the phosphorylation of D-glucose to D-glucose 6-phosphate using ADP as the phosphate donor. GDP and CDP can replace ADP, but with reduced efficiency. In Homo sapiens (Human), this protein is ADP-dependent glucokinase (ADPGK).